Here is a 208-residue protein sequence, read N- to C-terminus: Uracil phosphoribosyltransferase (208 aa).

5-phospho-alpha-D-ribose 1-diphosphate contacts are provided by residues Arg-78, Arg-103, and Asp-130–Ser-138. Uracil is bound by residues Ile-193 and Gly-198–Ala-200. Residue Asp-199 participates in 5-phospho-alpha-D-ribose 1-diphosphate binding.

It belongs to the UPRTase family. The cofactor is Mg(2+).

The enzyme catalyses UMP + diphosphate = 5-phospho-alpha-D-ribose 1-diphosphate + uracil. The protein operates within pyrimidine metabolism; UMP biosynthesis via salvage pathway; UMP from uracil: step 1/1. With respect to regulation, allosterically activated by GTP. Functionally, catalyzes the conversion of uracil and 5-phospho-alpha-D-ribose 1-diphosphate (PRPP) to UMP and diphosphate. This Aliivibrio salmonicida (strain LFI1238) (Vibrio salmonicida (strain LFI1238)) protein is Uracil phosphoribosyltransferase.